We begin with the raw amino-acid sequence, 76 residues long: DNA-directed RNA polymerase subunit epsilon (76 aa).

It belongs to the RNA polymerase subunit epsilon family. As to quaternary structure, RNAP is composed of a core of 2 alpha, a beta and a beta' subunit. The core is associated with a delta subunit, and at least one of epsilon or omega. When a sigma factor is associated with the core the holoenzyme is formed, which can initiate transcription.

The catalysed reaction is RNA(n) + a ribonucleoside 5'-triphosphate = RNA(n+1) + diphosphate. Its function is as follows. A non-essential component of RNA polymerase (RNAP). The chain is DNA-directed RNA polymerase subunit epsilon from Streptococcus gordonii (strain Challis / ATCC 35105 / BCRC 15272 / CH1 / DL1 / V288).